A 189-amino-acid polypeptide reads, in one-letter code: Elongation factor P (189 aa).

Residue K34 is modified to N6-(3,6-diaminohexanoyl)-5-hydroxylysine.

It belongs to the elongation factor P family. Post-translationally, may be beta-lysylated on the epsilon-amino group of Lys-34 by the combined action of EpmA and EpmB, and then hydroxylated on the C5 position of the same residue by EpmC (if this protein is present). Lysylation is critical for the stimulatory effect of EF-P on peptide-bond formation. The lysylation moiety may extend toward the peptidyltransferase center and stabilize the terminal 3-CCA end of the tRNA. Hydroxylation of the C5 position on Lys-34 may allow additional potential stabilizing hydrogen-bond interactions with the P-tRNA.

The protein resides in the cytoplasm. The protein operates within protein biosynthesis; polypeptide chain elongation. In terms of biological role, involved in peptide bond synthesis. Alleviates ribosome stalling that occurs when 3 or more consecutive Pro residues or the sequence PPG is present in a protein, possibly by augmenting the peptidyl transferase activity of the ribosome. Modification of Lys-34 is required for alleviation. This chain is Elongation factor P, found in Francisella philomiragia subsp. philomiragia (strain ATCC 25017 / CCUG 19701 / FSC 153 / O#319-036).